The chain runs to 469 residues: Transcription factor phomD (469 aa).

The segment at residues 14-41 is a DNA-binding region (zn(2)-C6 fungal-type); that stretch reads CNACNESKVRCSQRKPTCARCERNGVEC. Residues 49–118 are disordered; it reads THKDAPPISM…QQKEEAAAAA (70 aa). Over residues 82–93 the composition is skewed to polar residues; the sequence is KANSNSSSNWHM. The span at 104–118 shows a compositional bias: low complexity; sequence QQQQQQQKEEAAAAA.

It is found in the nucleus. Its function is as follows. Transcription factor; part of the gene cluster that mediates the biosynthesis of the phomopsins, a group of hexapeptide mycotoxins which infects lupins and causes lupinosis disease in livestock. May play a role in the regulation of the production of phomopsins. The polypeptide is Transcription factor phomD (Diaporthe leptostromiformis (Lupinosis disease fungus)).